The chain runs to 1748 residues: RANBP2-like and GRIP domain-containing protein 1 (1748 aa).

The residue at position 14 (Thr14) is a Phosphothreonine. TPR repeat units lie at residues 51-84 (PRAH…NPPQ), 575-608 (QKMG…LKII), and 639-672 (EDAH…VSYW). The segment at 751–796 (GPLYKNGSLRNADSEIKHSTPSPTKYSLSPSKSYKYSPKTPPRWAE) is disordered. The span at 769–788 (STPSPTKYSLSPSKSYKYSP) shows a compositional bias: low complexity. In terms of domain architecture, RanBD1 1 spans 1021–1157 (HFEPVVQMPE…FEECQRLLLD (137 aa)). Disordered stretches follow at residues 1198–1233 (TKVT…TLEW) and 1291–1316 (AKLN…ERDG). Over residues 1220–1229 (IKPNPENTGP) the composition is skewed to polar residues. The span at 1302-1314 (TDEESDVTQEEER) shows a compositional bias: acidic residues. In terms of domain architecture, RanBD1 2 spans 1318–1454 (YFEPVVPLPD…FDEAKTAQEK (137 aa)). A compositionally biased stretch (polar residues) spans 1565–1578 (NDSETSSVAQSGSE). Residues 1565–1606 (NDSETSSVAQSGSESKVEPKKCELSKNSDIEQSSDSKVKNLS) are disordered. Over residues 1579-1602 (SKVEPKKCELSKNSDIEQSSDSKV) the composition is skewed to basic and acidic residues. One can recognise a GRIP domain in the interval 1685-1735 (QEESAANVEHLKNVLLQFIFLKPGSERESLLPVINTMLQLSPEEKGKLAAV).

This is RANBP2-like and GRIP domain-containing protein 1 (RGPD1) from Homo sapiens (Human).